The primary structure comprises 622 residues: Glutamyl-tRNA(Gln) amidotransferase subunit B, mitochondrial (622 aa).

The N-terminal 54 residues, 1 to 54 (MSRIPTRELGRYLLQGQICQRGCVASSVSKSRAKQLGRHPLLPHDRHQPTQARH), are a transit peptide targeting the mitochondrion. A disordered region spans residues 30–67 (KSRAKQLGRHPLLPHDRHQPTQARHAHTVTTTATPTQL). Low complexity predominate over residues 57 to 67 (TVTTTATPTQL).

Belongs to the GatB/GatE family. GatB subfamily. In terms of assembly, subunit of the heterotrimeric GatCAB amidotransferase (AdT) complex, composed of A, B and C subunits.

Its subcellular location is the mitochondrion. The catalysed reaction is L-glutamyl-tRNA(Gln) + L-glutamine + ATP + H2O = L-glutaminyl-tRNA(Gln) + L-glutamate + ADP + phosphate + H(+). Allows the formation of correctly charged Gln-tRNA(Gln) through the transamidation of misacylated Glu-tRNA(Gln) in the mitochondria. The reaction takes place in the presence of glutamine and ATP through an activated gamma-phospho-Glu-tRNA(Gln). The polypeptide is Glutamyl-tRNA(Gln) amidotransferase subunit B, mitochondrial (Verticillium alfalfae (strain VaMs.102 / ATCC MYA-4576 / FGSC 10136) (Verticillium wilt of alfalfa)).